Consider the following 350-residue polypeptide: Ion-translocating oxidoreductase complex subunit D (350 aa).

5 helical membrane passes run 19–39 (LMLLVILACLPGFLAQSWFFG), 41–61 (GTLIQILLALVTALGSEALVL), 67–87 (PVKPALLDGSAALTAVLIGLS), 88–108 (LPPLLPWWMLVLGTAFAIIIA), and 122–142 (PAMVAYVLLLVSFPVQMTSWL). T186 is subject to FMN phosphoryl threonine. The next 4 membrane-spanning stretches (helical) occupy residues 213–233 (WGGIGWSWVNLGYLLGGLFLL), 242–262 (IPGAILGSLLLAATLGYLMTP), 264–284 (ATATPMFHLFSGATMLGAFFI), and 299–316 (LVYGVLIGVLVYVIRRFG).

Belongs to the NqrB/RnfD family. As to quaternary structure, the complex is composed of six subunits: RnfA, RnfB, RnfC, RnfD, RnfE and RnfG. Requires FMN as cofactor.

Its subcellular location is the cell inner membrane. Its function is as follows. Part of a membrane-bound complex that couples electron transfer with translocation of ions across the membrane. The protein is Ion-translocating oxidoreductase complex subunit D of Aeromonas hydrophila subsp. hydrophila (strain ATCC 7966 / DSM 30187 / BCRC 13018 / CCUG 14551 / JCM 1027 / KCTC 2358 / NCIMB 9240 / NCTC 8049).